A 119-amino-acid polypeptide reads, in one-letter code: Large ribosomal subunit protein bL20c (119 aa).

This sequence belongs to the bacterial ribosomal protein bL20 family.

Its subcellular location is the plastid. It localises to the chloroplast. Its function is as follows. Binds directly to 23S ribosomal RNA and is necessary for the in vitro assembly process of the 50S ribosomal subunit. It is not involved in the protein synthesizing functions of that subunit. In Pinus thunbergii (Japanese black pine), this protein is Large ribosomal subunit protein bL20c (rpl20).